A 401-amino-acid polypeptide reads, in one-letter code: Phosphoglycerate kinase (401 aa).

Substrate contacts are provided by residues 20-22 (DFN), arginine 35, 58-61 (HLGR), arginine 117, and arginine 154. ATP-binding positions include lysine 204, glycine 298, glutamate 329, and 358–361 (GGDS).

The protein belongs to the phosphoglycerate kinase family. As to quaternary structure, monomer.

It localises to the cytoplasm. The catalysed reaction is (2R)-3-phosphoglycerate + ATP = (2R)-3-phospho-glyceroyl phosphate + ADP. It functions in the pathway carbohydrate degradation; glycolysis; pyruvate from D-glyceraldehyde 3-phosphate: step 2/5. The sequence is that of Phosphoglycerate kinase from Bifidobacterium longum (strain NCC 2705).